The following is a 503-amino-acid chain: Hexose transporter 1 (503 aa).

Topologically, residues Met-1–Ser-26 are cytoplasmic. A helical membrane pass occupies residues Leu-27 to Leu-47. Topologically, residues Asn-48–Ser-76 are extracellular. Cys-61 and Cys-68 are joined by a disulfide. Residues Phe-77–Val-97 form a helical membrane-spanning segment. The Cytoplasmic portion of the chain corresponds to Gln-98–Arg-102. Residues Phe-103–His-123 traverse the membrane as a helical segment. The Extracellular portion of the chain corresponds to His-124–Arg-132. A helical transmembrane segment spans residues Leu-133–Met-153. The Cytoplasmic portion of the chain corresponds to Thr-154–Gly-163. The chain crosses the membrane as a helical span at residues Val-164–Met-184. Gln-167 contacts alpha-D-glucose. Gln-167 provides a ligand contact to beta-D-glucose. Over Gly-185–Arg-205 the chain is Extracellular. Residues Leu-206–Tyr-226 form a helical membrane-spanning segment. Residues Lys-227–Asn-291 lie on the Cytoplasmic side of the membrane. The chain crosses the membrane as a helical span at residues Val-292 to Val-312. Alpha-D-glucose-binding residues include Gln-303, Gln-304, and Asn-309. Gln-303 is a beta-D-glucose binding site. Residue Asn-309 participates in beta-D-glucose binding. The Extracellular portion of the chain corresponds to Ser-313–Thr-329. The helical transmembrane segment at Thr-330 to Val-350 threads the bilayer. Asn-339 contacts beta-D-glucose. Residues Glu-351–Lys-356 lie on the Cytoplasmic side of the membrane. The chain crosses the membrane as a helical span at residues Thr-357–Ala-377. At Asn-378 to Ser-391 the chain is on the extracellular side. The chain crosses the membrane as a helical span at residues Ile-392–Ile-412. Position 411 (Trp-411) interacts with alpha-D-glucose. Residues Tyr-413 to Ser-428 lie on the Cytoplasmic side of the membrane. Residues Leu-429–Ile-449 traverse the membrane as a helical segment. The Extracellular segment spans residues Lys-450–Thr-454. A helical transmembrane segment spans residues Ile-455–Ile-475. The Cytoplasmic segment spans residues Lys-476 to Val-503.

The protein belongs to the major facilitator superfamily. Sugar transporter (TC 2.A.1.1) family. As to quaternary structure, homodimer.

The protein resides in the cell membrane. It carries out the reaction D-glucose(out) = D-glucose(in). The enzyme catalyses D-fructose(out) = D-fructose(in). It catalyses the reaction D-galactose(in) = D-galactose(out). The catalysed reaction is D-mannose(out) = D-mannose(in). It carries out the reaction D-glucosamine(out) = D-glucosamine(in). The enzyme catalyses D-xylose(out) = D-xylose(in). Its activity is regulated as follows. Inhibited by compound 3361 (3-O-((undec-10-en)-1-yl)-D-glucose). Functionally, sodium-independent facilitative hexose transporter. Can transport D-glucose and D-fructose. Can transport D-mannose, D-galactose, D-xylose and D-glucosamine. This Plasmodium vivax protein is Hexose transporter 1.